Here is a 514-residue protein sequence, read N- to C-terminus: Probable drug/proton antiporter YHK8 (514 aa).

Residues 1–74 (MVAEFQIASA…RHMSTARRYY (74 aa)) are Cytoplasmic-facing. Residues 75 to 95 (ISSLITFTSMVITMISSSWTL) traverse the membrane as a helical segment. Over 96-111 (PSTHIIEHFHISHEVS) the chain is Extracellular. A helical transmembrane segment spans residues 112 to 132 (TLGITLYVFGLGIGPLFLSPL). Residues 133–141 (SELYGRRIT) are Cytoplasmic-facing. The helical transmembrane segment at 142–162 (FLYALTLSIIWQCLTIWSKTI) threads the bilayer. The Extracellular portion of the chain corresponds to 163–170 (TGVMFGRF). Residues 171–191 (LSGFFGSAFLSVAGGAIADIF) traverse the membrane as a helical segment. The Cytoplasmic segment spans residues 192–200 (DKDQIGIPM). A helical transmembrane segment spans residues 201–221 (AIYTTSAFLGPSLGPIIGGAL). The Extracellular portion of the chain corresponds to 222 to 227 (YHQSYK). The helical transmembrane segment at 228–248 (WTFITLLITSGCCLVMIIFTI) threads the bilayer. The Cytoplasmic portion of the chain corresponds to 249–307 (PETYKPMLLIRKAKRLRKEKNDQRYYAVLEVTREQTSLLSAIFLSTKRPFGLLLRDRMM). The helical transmembrane segment at 308-328 (GVLCFYTGLELAIIYLYFVAF) threads the bilayer. Topologically, residues 329 to 342 (PYVFKKLYNFGPME) are extracellular. The chain crosses the membrane as a helical span at residues 343 to 363 (IACSYIGIMVGMILSAPTCLL). The Cytoplasmic segment spans residues 364–386 (FQKTFEWRVKRNNGVKTPEMRFE). The helical transmembrane segment at 387–407 (PLFYGAFLTPVGLFIFAFTCY) threads the bilayer. Topologically, residues 408 to 412 (KHVHW) are extracellular. A helical transmembrane segment spans residues 413–433 (IAPIIGSAIFGSGVYFVFTGV). At 434 to 447 (FAYTVDAYRRYAAS) the chain is on the cytoplasmic side. A helical transmembrane segment spans residues 448-468 (GMACNTFVRCIMAGVFPLFGL). At 469–477 (QMYKSMGVN) the chain is on the extracellular side. Residues 478-498 (WAGFLLAMVTVAMIPVPFLFT) traverse the membrane as a helical segment. Topologically, residues 499–514 (KYGARLRAKSPYAWDD) are cytoplasmic.

The protein belongs to the major facilitator superfamily. CAR1 family.

The protein resides in the membrane. Functionally, probable drug/proton antiporter. The protein is Probable drug/proton antiporter YHK8 (YHK8) of Saccharomyces cerevisiae (strain ATCC 204508 / S288c) (Baker's yeast).